The primary structure comprises 152 residues: Arginine repressor (152 aa).

The protein belongs to the ArgR family.

It is found in the cytoplasm. Its pathway is amino-acid biosynthesis; L-arginine biosynthesis [regulation]. Functionally, regulates arginine biosynthesis genes. This chain is Arginine repressor, found in Lactococcus lactis subsp. cremoris (strain MG1363).